The chain runs to 340 residues: Uroporphyrinogen decarboxylase (340 aa).

Substrate contacts are provided by residues 21–25 (RQAGR), aspartate 71, tyrosine 148, serine 203, and histidine 316.

Belongs to the uroporphyrinogen decarboxylase family. As to quaternary structure, homodimer.

The protein resides in the cytoplasm. It carries out the reaction uroporphyrinogen III + 4 H(+) = coproporphyrinogen III + 4 CO2. Its pathway is porphyrin-containing compound metabolism; protoporphyrin-IX biosynthesis; coproporphyrinogen-III from 5-aminolevulinate: step 4/4. In terms of biological role, catalyzes the decarboxylation of four acetate groups of uroporphyrinogen-III to yield coproporphyrinogen-III. The sequence is that of Uroporphyrinogen decarboxylase from Campylobacter hominis (strain ATCC BAA-381 / DSM 21671 / CCUG 45161 / LMG 19568 / NCTC 13146 / CH001A).